A 164-amino-acid chain; its full sequence is UPF0114 protein YqhA (164 aa).

3 helical membrane-spanning segments follow: residues 15 to 35 (LLAP…LKFF), 53 to 73 (LILV…LVMV), and 136 to 156 (LMWY…MGYL).

This sequence belongs to the UPF0114 family.

The protein localises to the cell membrane. In Shigella dysenteriae serotype 1 (strain Sd197), this protein is UPF0114 protein YqhA.